A 354-amino-acid chain; its full sequence is Protein RecA (354 aa).

Residue 78–85 participates in ATP binding; sequence GPESSGKT.

This sequence belongs to the RecA family.

It is found in the cytoplasm. In terms of biological role, can catalyze the hydrolysis of ATP in the presence of single-stranded DNA, the ATP-dependent uptake of single-stranded DNA by duplex DNA, and the ATP-dependent hybridization of homologous single-stranded DNAs. It interacts with LexA causing its activation and leading to its autocatalytic cleavage. This chain is Protein RecA, found in Zymomonas mobilis subsp. mobilis (strain ATCC 31821 / ZM4 / CP4).